We begin with the raw amino-acid sequence, 213 residues long: Ribosomal RNA large subunit methyltransferase E (213 aa).

S-adenosyl-L-methionine-binding residues include glycine 68, tryptophan 70, aspartate 88, aspartate 104, and aspartate 127. The active-site Proton acceptor is lysine 167.

Belongs to the class I-like SAM-binding methyltransferase superfamily. RNA methyltransferase RlmE family.

Its subcellular location is the cytoplasm. It catalyses the reaction uridine(2552) in 23S rRNA + S-adenosyl-L-methionine = 2'-O-methyluridine(2552) in 23S rRNA + S-adenosyl-L-homocysteine + H(+). Its function is as follows. Specifically methylates the uridine in position 2552 of 23S rRNA at the 2'-O position of the ribose in the fully assembled 50S ribosomal subunit. The polypeptide is Ribosomal RNA large subunit methyltransferase E (Neorickettsia sennetsu (strain ATCC VR-367 / Miyayama) (Ehrlichia sennetsu)).